We begin with the raw amino-acid sequence, 381 residues long: Chaperone protein DnaJ 1 (381 aa).

Positions 4–68 constitute a J domain; sequence DYYGLLGVSR…EKRRIVDLGG (65 aa). Residues 132 to 214 form a CR-type zinc finger; sequence GVTKQVTVDT…CMGDGRVRAR (83 aa). Residues cysteine 145, cysteine 148, cysteine 162, cysteine 165, cysteine 188, cysteine 191, cysteine 202, and cysteine 205 each coordinate Zn(2+). CXXCXGXG motif repeat units lie at residues 145-152, 162-169, 188-195, and 202-209; these read CDRCHGKG, CDTCGGRG, CPTCRGVG, and CHQCMGDG.

This sequence belongs to the DnaJ family. Homodimer. Zn(2+) is required as a cofactor.

The protein resides in the cytoplasm. Its function is as follows. Participates actively in the response to hyperosmotic and heat shock by preventing the aggregation of stress-denatured proteins and by disaggregating proteins, also in an autonomous, DnaK-independent fashion. Unfolded proteins bind initially to DnaJ; upon interaction with the DnaJ-bound protein, DnaK hydrolyzes its bound ATP, resulting in the formation of a stable complex. GrpE releases ADP from DnaK; ATP binding to DnaK triggers the release of the substrate protein, thus completing the reaction cycle. Several rounds of ATP-dependent interactions between DnaJ, DnaK and GrpE are required for fully efficient folding. Also involved, together with DnaK and GrpE, in the DNA replication of plasmids through activation of initiation proteins. The protein is Chaperone protein DnaJ 1 of Mycolicibacterium paratuberculosis (strain ATCC BAA-968 / K-10) (Mycobacterium paratuberculosis).